We begin with the raw amino-acid sequence, 474 residues long: Melanopsin (474 aa).

The Extracellular segment spans residues 1 to 72; the sequence is MNSPSESRVP…VDVPDHAHYT (72 aa). 2 N-linked (GlcNAc...) asparagine glycosylation sites follow: asparagine 31 and asparagine 35. Residues 73–93 traverse the membrane as a helical segment; the sequence is LGTVILLVGLTGMLGNLTVIY. Residues 94–107 are Cytoplasmic-facing; the sequence is TFCRNRGLRTPANM. A helical transmembrane segment spans residues 108–128; it reads LIINLAVSDFLMSFTQAPVFF. The Extracellular segment spans residues 129–144; that stretch reads ASSLYKKWLFGETGCK. A disulfide bond links cysteine 143 and cysteine 221. Residues 145 to 165 form a helical membrane-spanning segment; the sequence is FYAFCGAVFGIVSMITLTAIA. Topologically, residues 166-188 are cytoplasmic; sequence MDRYLVITRPLATIGMRSKRRTA. The chain crosses the membrane as a helical span at residues 189-209; the sequence is LVLLGVWLYALAWSLPPFFGW. Residues 210–238 lie on the Extracellular side of the membrane; the sequence is SAYVPEGLLTSCSWDYVTFTPLVRAYTML. The chain crosses the membrane as a helical span at residues 239–259; that stretch reads LFCFVFFLPLLIIIFCYIFIF. Over 260–293 the chain is Cytoplasmic; that stretch reads RAIRETGRACEGCGESPLRRRQWQRLQSEWKMAK. The chain crosses the membrane as a helical span at residues 294–314; sequence VALIVILLFVLSWAPYSTVAL. At 315-355 the chain is on the extracellular side; the sequence is VGFAGYSHILTPYMSSVPAVIAKASAIHNPIIYAITHPKYR. N6-(retinylidene)lysine is present on lysine 337. The helical transmembrane segment at 356–372 threads the bilayer; it reads AAIAQHLPCLGVLLGVS. Residues 373-474 lie on the Cytoplasmic side of the membrane; it reads GQRSHPSLSY…RHLPSLDRRM (102 aa). Residues 428–474 form a disordered region; that stretch reads AAQQASGQSFCSHDLEDGEVKAPSSPQEQKSKTPKTKRHLPSLDRRM.

The protein belongs to the G-protein coupled receptor 1 family. Opsin subfamily. As to expression, eye; expressed in a photosensitive subset of retinal ganglion cells (at protein level).

Its subcellular location is the cell membrane. It is found in the cell projection. The protein localises to the axon. It localises to the dendrite. The protein resides in the perikaryon. Photoreceptor that binds cis-retinaldehydes. Contributes to pupillar reflex, photoentrainment and other non-image forming responses to light. May be involved in the optokinetic visual tracking response. May be involved in the regulation of retinal hyaloid vessel growth and regression. In Rattus norvegicus (Rat), this protein is Melanopsin.